Consider the following 188-residue polypeptide: Ribosomal RNA small subunit methyltransferase G (188 aa).

Residues G69, F74, 119–120, and R134 each bind S-adenosyl-L-methionine; that span reads VQ.

The protein belongs to the methyltransferase superfamily. RNA methyltransferase RsmG family.

Its subcellular location is the cytoplasm. It carries out the reaction guanosine(527) in 16S rRNA + S-adenosyl-L-methionine = N(7)-methylguanosine(527) in 16S rRNA + S-adenosyl-L-homocysteine. In terms of biological role, specifically methylates the N7 position of guanine in position 527 of 16S rRNA. The protein is Ribosomal RNA small subunit methyltransferase G of Campylobacter jejuni subsp. jejuni serotype O:2 (strain ATCC 700819 / NCTC 11168).